Consider the following 469-residue polypeptide: Glutamate--tRNA ligase (469 aa).

The 'HIGH' region motif lies at Pro-9–Gly-19. Positions 98, 100, 125, and 127 each coordinate Zn(2+). Residues Lys-236 to Arg-240 carry the 'KMSKS' region motif. Lys-239 provides a ligand contact to ATP.

It belongs to the class-I aminoacyl-tRNA synthetase family. Glutamate--tRNA ligase type 1 subfamily. Monomer. Zn(2+) is required as a cofactor.

It is found in the cytoplasm. The catalysed reaction is tRNA(Glu) + L-glutamate + ATP = L-glutamyl-tRNA(Glu) + AMP + diphosphate. Functionally, catalyzes the attachment of glutamate to tRNA(Glu) in a two-step reaction: glutamate is first activated by ATP to form Glu-AMP and then transferred to the acceptor end of tRNA(Glu). This Shewanella baltica (strain OS155 / ATCC BAA-1091) protein is Glutamate--tRNA ligase.